We begin with the raw amino-acid sequence, 287 residues long: Pyridoxal kinase PdxY (287 aa).

Residues Ser-9 and Met-44–Gln-45 contribute to the substrate site. The ATP site is built by Asp-111, Ala-142, Glu-147, and Lys-180. Asp-221 provides a ligand contact to substrate.

The protein belongs to the pyridoxine kinase family. PdxY subfamily. Homodimer. Requires Mg(2+) as cofactor.

It catalyses the reaction pyridoxal + ATP = pyridoxal 5'-phosphate + ADP + H(+). Its pathway is cofactor metabolism; pyridoxal 5'-phosphate salvage; pyridoxal 5'-phosphate from pyridoxal: step 1/1. Its function is as follows. Pyridoxal kinase involved in the salvage pathway of pyridoxal 5'-phosphate (PLP). Catalyzes the phosphorylation of pyridoxal to PLP. This is Pyridoxal kinase PdxY from Burkholderia pseudomallei (strain K96243).